The sequence spans 405 residues: MDHLPMPKFGPLAGLRVVFSGIEIAGPFAGQMFAEWGAEVIWIENVAWADTIRVQPNYPQLSRRNLHALSLNIFKDEGREAFLKLMETTDIFIEASKGPAFARRGITDEVLWQHNPKLVIAHLSGFGQYGTEEYTNLPAYNTIAQAFSGYLIQNGDVDQPMPAFPYTADYFSGLTATTAALAALHKVRETGKGESIDIAMYEVMLRMGQYFMMDYFNGGEMCPRMSKGKDPYYAGCGLYKCADGYIVMELVGITQIEECFKDIGLAHLLGTPEIPEGTQLIHRIECPYGPLVEEKLDAWLAAHTIAEVKKRFAELNIACAKVLTVPELESNPQYVARESITQWQTMDGRTCKGPNIMPKFKNNPGQIWRGMPSHGMDTAAILKNIGYSENDIQELVSKGLAKVED.

CoA is bound by residues K97 and R104. The Nucleophile role is filled by D169.

Belongs to the CoA-transferase III family. CaiB subfamily. Homodimer.

Its subcellular location is the cytoplasm. It catalyses the reaction crotonobetainyl-CoA + (R)-carnitine = crotonobetaine + (R)-carnitinyl-CoA. It carries out the reaction 4-(trimethylamino)butanoyl-CoA + (R)-carnitine = (R)-carnitinyl-CoA + 4-(trimethylamino)butanoate. It functions in the pathway amine and polyamine metabolism; carnitine metabolism. Catalyzes the reversible transfer of the CoA moiety from gamma-butyrobetainyl-CoA to L-carnitine to generate L-carnitinyl-CoA and gamma-butyrobetaine. Is also able to catalyze the reversible transfer of the CoA moiety from gamma-butyrobetainyl-CoA or L-carnitinyl-CoA to crotonobetaine to generate crotonobetainyl-CoA. This chain is L-carnitine CoA-transferase, found in Shigella flexneri serotype 5b (strain 8401).